Consider the following 1049-residue polypeptide: Tegument protein pp150 (1049 aa).

Disordered stretches follow at residues 397–549 (EERQ…DPRF) and 659–945 (PFRM…YPAV). The span at 428 to 439 (ADEDDDDDDDDE) shows a compositional bias: acidic residues. Gly residues predominate over residues 452 to 462 (SGKGAASGGGV). Residues 463-474 (SSIFSGLLSSGS) show a composition bias toward low complexity. The segment covering 475 to 490 (QKPTSGPLNIPQQQQR) has biased composition (polar residues). The span at 509–525 (VRRDSAWDVRPLTETRG) shows a compositional bias: basic and acidic residues. Over residues 672 to 688 (TVSTTPRRPSTPRAAVT) the composition is skewed to low complexity. The span at 710-722 (PVEDSEEEDDDSS) shows a compositional bias: acidic residues. The segment covering 731-743 (GHTTPSSDYNNDV) has biased composition (polar residues). A compositionally biased stretch (low complexity) spans 745–757 (SPPSQTPEQSTPS). 3 stretches are compositionally biased toward polar residues: residues 766-776 (SPMTTTSTSQK), 791-800 (RAQTVTSTPV), and 808-835 (VSGTPSTVPATLLQPQPASSKTTSSRNV). 4 stretches are compositionally biased toward low complexity: residues 836-855 (TSGAGTSSASSARQPSASAS), 866-884 (SPATSPLSMLSSASPSPAK), 912-928 (VVGRPPSVPVSGSAPGR), and 936-945 (ASTTPTYPAV). Residue serine 922 is glycosylated (O-linked (GlcNAc) serine; by host). Serine 953 carries an O-linked (GlcNAc) serine; by host glycan. The disordered stretch occupies residues 1006–1032 (DLSSPQKSGTGPQPGSAGMGGAKTPSD). Polar residues predominate over residues 1008-1018 (SSPQKSGTGPQ).

This sequence belongs to the herpesviridae large structural phosphoprotein family. In terms of assembly, interacts with host BICD1 and RAB6A. Interacts with small capsid protein UL48A; this interaction links together the capsid and pp150. Interacts with host CCNA2. Post-translationally, phosphorylated by host CCNA2.

It localises to the virion tegument. Its subcellular location is the host cytoplasm. The protein resides in the host nucleus. Functionally, participates in the last steps of viral maturation and release. Associates with nuclear capsids prior to DNA encapsidation and later preserves the integrity of nucleocapsids through secondary envelopment at the assembly compartment. Interacts with host CCNA2 and thereby blocks the onset of lytic gene expression to promote establishment of a quiescent state of infection in undifferentiated cells. This is Tegument protein pp150 (UL32) from Homo sapiens (Human).